A 613-amino-acid polypeptide reads, in one-letter code: Chaperone protein dnaK (613 aa).

Belongs to the heat shock protein 70 family.

The protein resides in the plastid. The protein localises to the chloroplast. Functionally, acts as a chaperone. This chain is Chaperone protein dnaK, found in Phaeodactylum tricornutum (strain CCAP 1055/1).